Here is a 454-residue protein sequence, read N- to C-terminus: Ornithine aminotransferase (454 aa).

Lysine 280 bears the N6-(pyridoxal phosphate)lysine mark.

Belongs to the class-III pyridoxal-phosphate-dependent aminotransferase family. The cofactor is pyridoxal 5'-phosphate.

It is found in the cytoplasm. It catalyses the reaction a 2-oxocarboxylate + L-ornithine = L-glutamate 5-semialdehyde + an L-alpha-amino acid. It participates in amino-acid biosynthesis; L-proline biosynthesis; L-glutamate 5-semialdehyde from L-ornithine: step 1/1. The protein is Ornithine aminotransferase (otaA) of Emericella nidulans (strain FGSC A4 / ATCC 38163 / CBS 112.46 / NRRL 194 / M139) (Aspergillus nidulans).